A 279-amino-acid chain; its full sequence is Bifunctional protein FolD (279 aa).

NADP(+)-binding positions include 159–161 (GRS), Ser184, and Thr225.

It belongs to the tetrahydrofolate dehydrogenase/cyclohydrolase family. In terms of assembly, homodimer.

The catalysed reaction is (6R)-5,10-methylene-5,6,7,8-tetrahydrofolate + NADP(+) = (6R)-5,10-methenyltetrahydrofolate + NADPH. It carries out the reaction (6R)-5,10-methenyltetrahydrofolate + H2O = (6R)-10-formyltetrahydrofolate + H(+). It participates in one-carbon metabolism; tetrahydrofolate interconversion. Functionally, catalyzes the oxidation of 5,10-methylenetetrahydrofolate to 5,10-methenyltetrahydrofolate and then the hydrolysis of 5,10-methenyltetrahydrofolate to 10-formyltetrahydrofolate. The protein is Bifunctional protein FolD of Methanospirillum hungatei JF-1 (strain ATCC 27890 / DSM 864 / NBRC 100397 / JF-1).